Consider the following 466-residue polypeptide: Asparagine--tRNA ligase (466 aa).

It belongs to the class-II aminoacyl-tRNA synthetase family. Homodimer.

The protein resides in the cytoplasm. It catalyses the reaction tRNA(Asn) + L-asparagine + ATP = L-asparaginyl-tRNA(Asn) + AMP + diphosphate + H(+). This is Asparagine--tRNA ligase from Vibrio cholerae serotype O1 (strain ATCC 39315 / El Tor Inaba N16961).